The following is an 835-amino-acid chain: Leucine--tRNA ligase (835 aa).

A 'HIGH' region motif is present at residues 36-46 (PYPSGKIHVGH). The short motif at 602 to 606 (KMSKS) is the 'KMSKS' region element. Residue K605 coordinates ATP.

Belongs to the class-I aminoacyl-tRNA synthetase family.

Its subcellular location is the cytoplasm. The catalysed reaction is tRNA(Leu) + L-leucine + ATP = L-leucyl-tRNA(Leu) + AMP + diphosphate. In Rickettsia conorii (strain ATCC VR-613 / Malish 7), this protein is Leucine--tRNA ligase.